The chain runs to 819 residues: Outer membrane usher protein CssD (819 aa).

This sequence belongs to the fimbrial export usher family.

It is found in the cell outer membrane. Involved in the export and assembly of C6 fimbrial subunits across the outer membrane. This is Outer membrane usher protein CssD (cssD) from Escherichia coli.